A 75-amino-acid polypeptide reads, in one-letter code: Large ribosomal subunit protein bL31 (75 aa).

Zn(2+)-binding residues include cysteine 16, cysteine 18, cysteine 38, and cysteine 41.

It belongs to the bacterial ribosomal protein bL31 family. Type A subfamily. As to quaternary structure, part of the 50S ribosomal subunit. Zn(2+) is required as a cofactor.

Its function is as follows. Binds the 23S rRNA. The protein is Large ribosomal subunit protein bL31 of Mycolicibacterium smegmatis (strain ATCC 700084 / mc(2)155) (Mycobacterium smegmatis).